Consider the following 119-residue polypeptide: Protein Wnt-4 (119 aa).

The O-palmitoleoyl serine; by PORCN moiety is linked to residue S1. 2 cysteine pairs are disulfide-bonded: C69–C100 and C85–C95. N86 carries an N-linked (GlcNAc...) asparagine glycan.

This sequence belongs to the Wnt family. In terms of processing, palmitoleoylation is required for efficient binding to frizzled receptors. Depalmitoleoylation leads to Wnt signaling pathway inhibition.

The protein resides in the secreted. The protein localises to the extracellular space. Its subcellular location is the extracellular matrix. Its function is as follows. Ligand for members of the frizzled family of seven transmembrane receptors. Plays an important role in embryonic development. The sequence is that of Protein Wnt-4 (WNT-4) from Plestiodon skiltonianus (Western skink).